Consider the following 176-residue polypeptide: NAD(P)H-quinone oxidoreductase subunit 6, chloroplastic (176 aa).

A run of 5 helical transmembrane segments spans residues 10 to 30, 32 to 52, 61 to 81, 92 to 112, and 152 to 172; these read FLLV…VLLP, PIFS…LYIL, AQLL…VMFM, LWTV…FSLM, and FFLP…GAIS.

The protein belongs to the complex I subunit 6 family. NDH is composed of at least 16 different subunits, 5 of which are encoded in the nucleus.

It is found in the plastid. The protein localises to the chloroplast thylakoid membrane. The catalysed reaction is a plastoquinone + NADH + (n+1) H(+)(in) = a plastoquinol + NAD(+) + n H(+)(out). It catalyses the reaction a plastoquinone + NADPH + (n+1) H(+)(in) = a plastoquinol + NADP(+) + n H(+)(out). Its function is as follows. NDH shuttles electrons from NAD(P)H:plastoquinone, via FMN and iron-sulfur (Fe-S) centers, to quinones in the photosynthetic chain and possibly in a chloroplast respiratory chain. The immediate electron acceptor for the enzyme in this species is believed to be plastoquinone. Couples the redox reaction to proton translocation, and thus conserves the redox energy in a proton gradient. The sequence is that of NAD(P)H-quinone oxidoreductase subunit 6, chloroplastic (ndhG) from Nasturtium officinale (Watercress).